A 114-amino-acid chain; its full sequence is T cell receptor beta variable 3-1 (114 aa).

The signal sequence occupies residues Met1–Thr21. The Ig-like domain occupies Ala22–Gln114. A disulfide bridge connects residues Cys42 and Cys110. A glycan (N-linked (GlcNAc...) asparagine) is linked at Asn76.

In terms of assembly, alpha-beta TR is a heterodimer composed of an alpha and beta chain; disulfide-linked. The alpha-beta TR is associated with the transmembrane signaling CD3 coreceptor proteins to form the TR-CD3 (TcR or TCR). The assembly of alpha-beta TR heterodimers with CD3 occurs in the endoplasmic reticulum where a single alpha-beta TR heterodimer associates with one CD3D-CD3E heterodimer, one CD3G-CD3E heterodimer and one CD247 homodimer forming a stable octameric structure. CD3D-CD3E and CD3G-CD3E heterodimers preferentially associate with TR alpha and TR beta chains, respectively. The association of the CD247 homodimer is the last step of TcR assembly in the endoplasmic reticulum and is required for transport to the cell surface.

The protein localises to the cell membrane. V region of the variable domain of T cell receptor (TR) beta chain that participates in the antigen recognition. Alpha-beta T cell receptors are antigen specific receptors which are essential to the immune response and are present on the cell surface of T lymphocytes. Recognize peptide-major histocompatibility (MH) (pMH) complexes that are displayed by antigen presenting cells (APC), a prerequisite for efficient T cell adaptive immunity against pathogens. Binding of alpha-beta TR to pMH complex initiates TR-CD3 clustering on the cell surface and intracellular activation of LCK that phosphorylates the ITAM motifs of CD3G, CD3D, CD3E and CD247 enabling the recruitment of ZAP70. In turn ZAP70 phosphorylates LAT, which recruits numerous signaling molecules to form the LAT signalosome. The LAT signalosome propagates signal branching to three major signaling pathways, the calcium, the mitogen-activated protein kinase (MAPK) kinase and the nuclear factor NF-kappa-B (NF-kB) pathways, leading to the mobilization of transcription factors that are critical for gene expression and essential for T cell growth and differentiation. The T cell repertoire is generated in the thymus, by V-(D)-J rearrangement. This repertoire is then shaped by intrathymic selection events to generate a peripheral T cell pool of self-MH restricted, non-autoaggressive T cells. Post-thymic interaction of alpha-beta TR with the pMH complexes shapes TR structural and functional avidity. The chain is T cell receptor beta variable 3-1 from Homo sapiens (Human).